We begin with the raw amino-acid sequence, 109 residues long: Parvalbumin, muscle (109 aa).

Ala-1 bears the N-acetylalanine mark. EF-hand domains are found at residues 38 to 73 (KSPE…FTPD) and 77 to 109 (LSDK…VAES). Residues Asp-51, Asp-53, Ser-55, Glu-62, Asp-90, Asp-92, Asp-94, Lys-96, and Glu-101 each coordinate Ca(2+).

Belongs to the parvalbumin family.

Its function is as follows. In muscle, parvalbumin is thought to be involved in relaxation after contraction. It binds two calcium ions. This is Parvalbumin, muscle from Gallus gallus (Chicken).